The chain runs to 201 residues: MANNEVIENTWLERPSPEVAPELIGCTLVRRISEEKIIRSTIVETEAYAPGDPACHAYRKRTPRNTVMFGPPGISYVFLIYGMYHCLNVVTDIDGIPSVVLIRALQLESVPNWLWEHIPKQKSKPKVSRLAAGPGKLCRLLNIDLNLNGSRLRAGQPMWLEQRSPSFEKNLQIVQTTRIGITKGTNLLWRWYLANCDAVSK.

It belongs to the DNA glycosylase MPG family.

This is Putative 3-methyladenine DNA glycosylase from Trichodesmium erythraeum (strain IMS101).